The chain runs to 310 residues: Probable cell division protein WhiA (310 aa).

Residues 277-310 (SLKELAEQVPDGPISKSGVNHRLKKLHEIAENLR) constitute a DNA-binding region (H-T-H motif).

The protein belongs to the WhiA family.

Involved in cell division and chromosome segregation. This Lactobacillus delbrueckii subsp. bulgaricus (strain ATCC 11842 / DSM 20081 / BCRC 10696 / JCM 1002 / NBRC 13953 / NCIMB 11778 / NCTC 12712 / WDCM 00102 / Lb 14) protein is Probable cell division protein WhiA.